The chain runs to 1117 residues: Leucine-rich repeats and immunoglobulin-like domains protein 3 (1117 aa).

The signal sequence occupies residues 1–24 (MGAPGLRAATAALGLLLCAGLGRA). The LRRNT domain occupies 38-74 (LLDDDAQRPCPAACHCLGDLLDCSRRRLVRLPDPLPA). LRR repeat units follow at residues 75-98 (WVTRLDLSHNRLSFIQTSSLSHLQ), 99-120 (SLQEVKLNNNELETIPNLGSIS), 122-143 (NIRQLSLAGNAIDKILPEQLEA), 146-168 (SLETLDLSNNNISELRTAFPPLQ), 169-189 (LKYLYINNNRVSSMEPGYFDN), 193-214 (TLLVLKLNRNRISAIPPKMFKL), 216-237 (QLQHLELNRNKIKNVDGLTFQG), 240-261 (ALKSLKMQRNGVTKLMDGAFWG), 264-285 (NMEVLQLDHNNLTEITKGWLYG), 288-309 (MLRELHLSQNAINRISPDAWEF), 312-333 (KLSELDLTFNHLSRLDDSSFLG), 336-357 (LLNALHIGNNKVSYIADCAFRG), 360-382 (SLKTLDLRNNEISWTIEDMSGAF), 387-408 (RLRQLILQGNRIRSITKKAFAG), and 411-432 (TLEHLDLSGNAIMSLQSNAFSQ). A glycan (N-linked (GlcNAc...) asparagine) is linked at Asn156. N-linked (GlcNAc...) asparagine glycosylation occurs at Asn274. Residues Asn442 and Asn469 are each glycosylated (N-linked (GlcNAc...) asparagine). The 52-residue stretch at 444-495 (SSLLCDCQLRWLPQWVAENNFQSFVNASCAHPQLLKGRSIFTVSPDGFVCDD) folds into the LRRCT domain. Ig-like C2-type domains are found at residues 499 to 598 (PQIT…AKLT), 603 to 692 (PSFT…ATLT), and 697 to 783 (PSFL…VRLS). Disulfide bonds link Cys520/Cys581 and Cys624/Cys676. N-linked (GlcNAc...) asparagine glycosylation is found at Asn688 and Asn729. Cys718 and Cys767 are oxidised to a cystine. A helical membrane pass occupies residues 810–830 (VVIIAVVCCVVGTSLVWVVII). N-linked (GlcNAc...) asparagine glycosylation is present at Asn1014. The tract at residues 1019–1093 (DFSTGPEPGS…KERTDFREEN (75 aa)) is disordered. Residues 1083–1093 (DKERTDFREEN) are compositionally biased toward basic and acidic residues.

Interacts with EGFR, ERBB2 and ERBB4 (in vitro). As to expression, widely expressed.

It localises to the cell membrane. Its subcellular location is the cytoplasmic vesicle membrane. Functionally, plays a role in craniofacial and inner ear morphogenesis during embryonic development. Acts within the otic vesicle epithelium to control formation of the lateral semicircular canal in the inner ear, possibly by restricting the expression of NTN1. The sequence is that of Leucine-rich repeats and immunoglobulin-like domains protein 3 (Lrig3) from Mus musculus (Mouse).